Reading from the N-terminus, the 156-residue chain is Mitochondrial translation release factor in rescue (156 aa).

Positions 44–108 (EEELEEQFVR…LREKLEVAYK (65 aa)) are GGQ domain. Residues 58 to 60 (GGQ) carry the GGQ motif. Residues 100 to 141 (REKLEVAYKGEESELLKMKKESMQKKQDKRRKVNENIEKKRR) adopt a coiled-coil conformation. 2 stretches are compositionally biased toward basic and acidic residues: residues 114-125 (LLKMKKESMQKK) and 132-156 (VNEN…DKST). A disordered region spans residues 114–156 (LLKMKKESMQKKQDKRRKVNENIEKKRRFKEMLNSKQEDDKST).

It belongs to the prokaryotic/mitochondrial release factor family. As to quaternary structure, interacts (via C-terminus) with MTRES1 (via S4 domain). Associates with mitoribosomal S39 large subunit, peptidyl tRNA and nascent chain.

The protein resides in the mitochondrion. Part of a mitoribosome-associated quality control pathway that prevents aberrant translation by responding to interruptions during elongation. As heterodimer with MTRES1, ejects the unfinished nascent chain and peptidyl transfer RNA (tRNA), respectively, from stalled ribosomes. Recruitment of mitoribosome biogenesis factors to these quality control intermediates suggests additional roles for MTRES1 and MTRF during mitoribosome rescue. In Danio rerio (Zebrafish), this protein is Mitochondrial translation release factor in rescue (mtrfr).